The primary structure comprises 457 residues: GTPase Era, mitochondrial (457 aa).

The N-terminal 18 residues, 1-18, are a transit peptide targeting the mitochondrion; the sequence is MAFRVSISTFGKSLRVRR. The region spanning 107-350 is the Era-type G domain; it reads KVLRVAIIGA…RYLVVGAKPG (244 aa). The interval 115-122 is G1; that stretch reads GAPNAGKS. 115 to 122 is a GTP binding site; it reads GAPNAGKS. The G2 stretch occupies residues 141-145; that stretch reads HTTRA. The tract at residues 162 to 165 is G3; the sequence is DTPG. GTP is bound by residues 162–166 and 231–234; these read DTPGL and NKVD. Positions 231–234 are G4; the sequence is NKVD. Residues 270–290 show a composition bias toward basic and acidic residues; it reads AERRTDREARTSGSGDEEKPG. The tract at residues 270-300 is disordered; it reads AERRTDREARTSGSGDEEKPGGDVADGEGSE. Residues 328-330 are G5; the sequence is VSA. Residues 376–457 form the KH type-2 domain; it reads LLEYLPKEVP…KLRLSVKVKN (82 aa).

This sequence belongs to the TRAFAC class TrmE-Era-EngA-EngB-Septin-like GTPase superfamily. Era GTPase family.

The protein resides in the mitochondrion matrix. The protein localises to the mitochondrion inner membrane. Its function is as follows. Probable GTPase that plays a role in the mitochondrial ribosomal small subunit assembly. Specifically binds the 12S mitochondrial rRNA (12S mt-rRNA) to a 33 nucleotide section delineating the 3' terminal stem-loop region. May act as a chaperone that protects the 12S mt-rRNA on the 28S mitoribosomal subunit during ribosomal small subunit assembly. The chain is GTPase Era, mitochondrial (eral1) from Salmo salar (Atlantic salmon).